Consider the following 416-residue polypeptide: NADH-quinone oxidoreductase subunit D (416 aa).

It belongs to the complex I 49 kDa subunit family. NDH-1 is composed of 14 different subunits. Subunits NuoB, C, D, E, F, and G constitute the peripheral sector of the complex.

Its subcellular location is the cell inner membrane. It catalyses the reaction a quinone + NADH + 5 H(+)(in) = a quinol + NAD(+) + 4 H(+)(out). In terms of biological role, NDH-1 shuttles electrons from NADH, via FMN and iron-sulfur (Fe-S) centers, to quinones in the respiratory chain. The immediate electron acceptor for the enzyme in this species is believed to be ubiquinone. Couples the redox reaction to proton translocation (for every two electrons transferred, four hydrogen ions are translocated across the cytoplasmic membrane), and thus conserves the redox energy in a proton gradient. The chain is NADH-quinone oxidoreductase subunit D from Rhodopseudomonas palustris (strain BisB5).